We begin with the raw amino-acid sequence, 189 residues long: uncharacterized protein (189 aa).

One can recognise a Macro domain in the interval Met-1 to Leu-174.

This is an uncharacterized protein from Aeropyrum pernix (strain ATCC 700893 / DSM 11879 / JCM 9820 / NBRC 100138 / K1).